The sequence spans 506 residues: 2-isopropylmalate synthase (506 aa).

Residues 4–266 (ILFMDTTLRD…EPSITLKEIK (263 aa)) enclose the Pyruvate carboxyltransferase domain. Residues aspartate 13, histidine 201, histidine 203, and asparagine 237 each coordinate Mn(2+). The segment at 390–506 (NITQLQVHFV…KLKSFIQLVK (117 aa)) is regulatory domain.

It belongs to the alpha-IPM synthase/homocitrate synthase family. LeuA type 1 subfamily. As to quaternary structure, homodimer. Mn(2+) is required as a cofactor.

The protein resides in the cytoplasm. It catalyses the reaction 3-methyl-2-oxobutanoate + acetyl-CoA + H2O = (2S)-2-isopropylmalate + CoA + H(+). The protein operates within amino-acid biosynthesis; L-leucine biosynthesis; L-leucine from 3-methyl-2-oxobutanoate: step 1/4. Functionally, catalyzes the condensation of the acetyl group of acetyl-CoA with 3-methyl-2-oxobutanoate (2-ketoisovalerate) to form 3-carboxy-3-hydroxy-4-methylpentanoate (2-isopropylmalate). In Bacillus thuringiensis subsp. konkukian (strain 97-27), this protein is 2-isopropylmalate synthase.